A 419-amino-acid polypeptide reads, in one-letter code: UDP-N-acetylglucosamine 1-carboxyvinyltransferase (419 aa).

Lys22–Asn23 provides a ligand contact to phosphoenolpyruvate. Arg93 provides a ligand contact to UDP-N-acetyl-alpha-D-glucosamine. Residue Cys117 is the Proton donor of the active site. Cys117 carries the 2-(S-cysteinyl)pyruvic acid O-phosphothioketal modification. The UDP-N-acetyl-alpha-D-glucosamine site is built by Asp307 and Ile329.

This sequence belongs to the EPSP synthase family. MurA subfamily.

It localises to the cytoplasm. It carries out the reaction phosphoenolpyruvate + UDP-N-acetyl-alpha-D-glucosamine = UDP-N-acetyl-3-O-(1-carboxyvinyl)-alpha-D-glucosamine + phosphate. Its pathway is cell wall biogenesis; peptidoglycan biosynthesis. Cell wall formation. Adds enolpyruvyl to UDP-N-acetylglucosamine. This Shewanella piezotolerans (strain WP3 / JCM 13877) protein is UDP-N-acetylglucosamine 1-carboxyvinyltransferase.